The primary structure comprises 473 residues: Ribulose bisphosphate carboxylase large chain (473 aa).

Residues 1 to 136 form a necessary and sufficient to target proteins to carboxysomes, interacts with shell proteins region; the sequence is MAVKKYSAGV…RLEDVRFPLA (136 aa). Substrate-binding residues include Asn116 and Thr166. Lys168 (proton acceptor) is an active-site residue. Lys170 provides a ligand contact to substrate. Mg(2+)-binding residues include Lys194, Asp196, and Glu197. Lys194 is modified (N6-carboxylysine). The Proton acceptor role is filled by His287. 3 residues coordinate substrate: Arg288, His320, and Ser372.

This sequence belongs to the RuBisCO large chain family. Type I subfamily. In terms of assembly, heterohexadecamer of 8 large chains and 8 small chains. Forms a CsoS2-CsoS1-RuBisCO complex. The N-terminus (residues 1-136) interacts with shell proteins CsoS1A, CsoS1B and CsoS1C. Holo-RuBisCO interacts with the N-terminal repeats of CsoS2; binding is sensitive to ionic strength. A fusion of a single N-terminal repeat to the C-terminus of the large subunit of RuBisCO (cbbL) shows the repeat can lie between a CbbL dimer, making minor contacts to CbbS; thus each RuBisCO holoenzyme could bind 8 repeats. Requires Mg(2+) as cofactor.

Its subcellular location is the carboxysome. The catalysed reaction is 2 (2R)-3-phosphoglycerate + 2 H(+) = D-ribulose 1,5-bisphosphate + CO2 + H2O. It catalyses the reaction D-ribulose 1,5-bisphosphate + O2 = 2-phosphoglycolate + (2R)-3-phosphoglycerate + 2 H(+). Its function is as follows. RuBisCO catalyzes two reactions: the carboxylation of D-ribulose 1,5-bisphosphate, the primary event in carbon dioxide fixation, as well as the oxidative fragmentation of the pentose substrate. Both reactions occur simultaneously and in competition at the same active site. There are estimated to be 270 RuBisCO heterohexadecamers per carboxysome. In terms of biological role, alpha-carboxysomes are able to assemble in the absence of RuBisCO, unlike beta-carboxysomes. The RuBisCO large subunit is required for enzyme integration into carboxysomes; replacing it with the carboxysomally targeted gene (Tcr_0838, AC Q31HD9) of H.crungenus places RuBisCO in the carboxysome, while the non-carboxysomal large subunit of H.crungenus (Tcr_0427, AC Q31IK0) is not incorporated in the carboxysome. This Halothiobacillus neapolitanus (strain ATCC 23641 / c2) (Thiobacillus neapolitanus) protein is Ribulose bisphosphate carboxylase large chain.